Consider the following 113-residue polypeptide: Hydrogenase maturation factor HypA (113 aa).

His2 is a Ni(2+) binding site. The Zn(2+) site is built by Cys73, Cys76, Cys89, and Cys92.

This sequence belongs to the HypA/HybF family.

Involved in the maturation of [NiFe] hydrogenases. Required for nickel insertion into the metal center of the hydrogenase. The chain is Hydrogenase maturation factor HypA from Paracoccus denitrificans (strain Pd 1222).